The following is a 436-amino-acid chain: Chromosomal replication initiator protein DnaA (436 aa).

A domain I, interacts with DnaA modulators region spans residues 1 to 80; it reads MSHEAVWQHV…QAPRFELRVV (80 aa). The tract at residues 80 to 100 is domain II; the sequence is VPGVVVQEDIFQAAPAEAPRP. The domain III, AAA+ region stretch occupies residues 101-317; the sequence is KLNPKYTFEN…GALMRAIAFA (217 aa). Residues G145, G147, K148, and T149 each coordinate ATP. Residues 318–436 form a domain IV, binds dsDNA region; that stretch reads SLNGVELTRA…LLRTLREACT (119 aa).

The protein belongs to the DnaA family. Oligomerizes as a right-handed, spiral filament on DNA at oriC.

It localises to the cytoplasm. It catalyses the reaction ATP + H2O = ADP + phosphate + H(+). In terms of biological role, plays an essential role in the initiation and regulation of chromosomal replication. ATP-DnaA binds to the origin of replication (oriC) to initiate formation of the DNA replication initiation complex once per cell cycle. Binds the DnaA box (a 9 base pair repeat at the origin) and separates the double-stranded (ds)DNA. Forms a right-handed helical filament on oriC DNA; dsDNA binds to the exterior of the filament while single-stranded (ss)DNA is stabiized in the filament's interior. The ATP-DnaA-oriC complex binds and stabilizes one strand of the AT-rich DNA unwinding element (DUE), permitting loading of DNA polymerase. After initiation quickly degrades to an ADP-DnaA complex that is not apt for DNA replication. Binds acidic phospholipids. Its function is as follows. The DnaA box consensus is 5'-TTATC[CA]A[CA]A-3' in this bacterium; oriC consists of 13 clustered DnaA boxes and a 40 base pair AT-rich region. ATP-DnaA binds cooperatively to multiple DnaA boxes, while ADP-DnaA binds with low cooperativity to the individual DnaA boxes. About 16-18 DnaA protein molecules bind their sites in oriC. Has a slow ATPase activity. Binds linear and supercoiled DNA. This Thermus thermophilus (strain ATCC 27634 / DSM 579 / HB8) protein is Chromosomal replication initiator protein DnaA.